A 153-amino-acid chain; its full sequence is 6,7-dimethyl-8-ribityllumazine synthase (153 aa).

5-amino-6-(D-ribitylamino)uracil-binding positions include Phe-23, 57–59 (AYE), and 81–83 (AVI). Residue 86–87 (AT) coordinates (2S)-2-hydroxy-3-oxobutyl phosphate. The Proton donor role is filled by His-89. Phe-113 provides a ligand contact to 5-amino-6-(D-ribitylamino)uracil. Arg-127 is a (2S)-2-hydroxy-3-oxobutyl phosphate binding site.

This sequence belongs to the DMRL synthase family.

The enzyme catalyses (2S)-2-hydroxy-3-oxobutyl phosphate + 5-amino-6-(D-ribitylamino)uracil = 6,7-dimethyl-8-(1-D-ribityl)lumazine + phosphate + 2 H2O + H(+). It functions in the pathway cofactor biosynthesis; riboflavin biosynthesis; riboflavin from 2-hydroxy-3-oxobutyl phosphate and 5-amino-6-(D-ribitylamino)uracil: step 1/2. In terms of biological role, catalyzes the formation of 6,7-dimethyl-8-ribityllumazine by condensation of 5-amino-6-(D-ribitylamino)uracil with 3,4-dihydroxy-2-butanone 4-phosphate. This is the penultimate step in the biosynthesis of riboflavin. This Leptospira borgpetersenii serovar Hardjo-bovis (strain JB197) protein is 6,7-dimethyl-8-ribityllumazine synthase.